The following is a 369-amino-acid chain: UDP-3-O-acylglucosamine N-acyltransferase (369 aa).

The active-site Proton acceptor is the His-263.

The protein belongs to the transferase hexapeptide repeat family. LpxD subfamily. As to quaternary structure, homotrimer.

The enzyme catalyses a UDP-3-O-[(3R)-3-hydroxyacyl]-alpha-D-glucosamine + a (3R)-hydroxyacyl-[ACP] = a UDP-2-N,3-O-bis[(3R)-3-hydroxyacyl]-alpha-D-glucosamine + holo-[ACP] + H(+). It functions in the pathway bacterial outer membrane biogenesis; LPS lipid A biosynthesis. Its function is as follows. Catalyzes the N-acylation of UDP-3-O-acylglucosamine using 3-hydroxyacyl-ACP as the acyl donor. Is involved in the biosynthesis of lipid A, a phosphorylated glycolipid that anchors the lipopolysaccharide to the outer membrane of the cell. This Burkholderia ambifaria (strain MC40-6) protein is UDP-3-O-acylglucosamine N-acyltransferase.